A 211-amino-acid chain; its full sequence is MANPIQEILEKQVLTVAKAMEDKIDDEIASLEKLDEDDLEVLRERRLKQMKKMAEKKKRWISLGHGEYSEIHSEKDFFSVVKASERVVCHFYRENWPCKVMDKHMSILAKQHIETRFVKIQAEKSPFLAERLKIVVLPTLALIKNTKVDDYVVGFNELGGKDDFSTEDLEERIARAQVIHYDGESSSLKPKSTTQVRRNVRQSARSDSDSE.

In terms of domain architecture, Thioredoxin spans 68 to 178 (YSEIHSEKDF…LEERIARAQV (111 aa)). Over residues 184–203 (ESSSLKPKSTTQVRRNVRQS) the composition is skewed to polar residues. A disordered region spans residues 184 to 211 (ESSSLKPKSTTQVRRNVRQSARSDSDSE).

The chain is Thioredoxin domain-containing protein 9 homolog from Arabidopsis thaliana (Mouse-ear cress).